Reading from the N-terminus, the 481-residue chain is RuvB-like helicase 2 (481 aa).

ATP is bound at residue 73-80 (GEPSTGKT). A disordered region spans residues 453–481 (EEVERDPAAGGGAKRRVEGGGGDAQPMEH).

Belongs to the RuvB family. As to quaternary structure, forms homohexameric rings. May form a dodecamer with rept made of two stacked hexameric rings. Component of the chromatin remodeling Ino80 complex. Interacts with Myc and pont. Higher expression occurs in primordia of mesoderm, anterior and posterior midgut and cephalic furrow early in gastrulation, as well as in endoderm and mesoderm lineages during germ band extension. Later in development expression is only maintained in endoderm cells. Expressed in thoracic and abdominal segment neural precursors of all embryonic chordotonal organs.

It localises to the nucleus. It carries out the reaction ATP + H2O = ADP + phosphate + H(+). Its function is as follows. Acts as a transcriptional coactivator in Wg signaling caused by altered arm signaling. Pont and rept interfere antagonistically with nuclear arm signaling function, and are required to enhance or reduce arm activity, respectively. Also an essential cofactor for the normal function of Myc; required for cellular proliferation and growth. Functionally, proposed core component of the chromatin remodeling Ino80 complex which is involved in transcriptional regulation, DNA replication and probably DNA repair. The polypeptide is RuvB-like helicase 2 (Drosophila melanogaster (Fruit fly)).